Reading from the N-terminus, the 382-residue chain is Pyrimidine monooxygenase RutA (382 aa).

FMN is bound by residues 68 to 69 (IK), asparagine 134, glutamate 143, 159 to 160 (RY), and serine 209.

Belongs to the NtaA/SnaA/DszA monooxygenase family. RutA subfamily.

The enzyme catalyses uracil + FMNH2 + NADH + O2 = (Z)-3-ureidoacrylate + FMN + NAD(+) + H2O + H(+). It carries out the reaction thymine + FMNH2 + NADH + O2 = (Z)-2-methylureidoacrylate + FMN + NAD(+) + H2O + H(+). Its function is as follows. Catalyzes the pyrimidine ring opening between N-3 and C-4 by an unusual flavin hydroperoxide-catalyzed mechanism, adding oxygen atoms in the process to yield ureidoacrylate peracid, that immediately reacts with FMN forming ureidoacrylate and FMN-N(5)-oxide. The FMN-N(5)-oxide reacts spontaneously with NADH to produce FMN. Requires the flavin reductase RutF to regenerate FMN in vivo. The sequence is that of Pyrimidine monooxygenase RutA from Escherichia coli (strain K12 / MC4100 / BW2952).